The chain runs to 119 residues: MPRVKGGPVTRRRRKKVLKLAKGYFGAKHALYRVANQQVMKSLMYAYRDRRQRKRDFRKLWIARINAAARQNGLSYSRLMHGLKLAGVEVNRKMLADLAVNDQAAFAQLADLAKANLNK.

It belongs to the bacterial ribosomal protein bL20 family.

Its function is as follows. Binds directly to 23S ribosomal RNA and is necessary for the in vitro assembly process of the 50S ribosomal subunit. It is not involved in the protein synthesizing functions of that subunit. This Geobacillus thermodenitrificans (strain NG80-2) protein is Large ribosomal subunit protein bL20.